The primary structure comprises 257 residues: Dihydroorotate dehydrogenase B (NAD(+)), electron transfer subunit (257 aa).

The region spanning 2-102 (IGRERMTVAS…LGPLGNGFPL (101 aa)) is the FAD-binding FR-type domain. Residues 53–56 (RPLS), 70–72 (IYR), and 77–78 (GT) each bind FAD. [2Fe-2S] cluster contacts are provided by C221, C226, C229, and C244.

Belongs to the PyrK family. As to quaternary structure, heterotetramer of 2 PyrK and 2 PyrD type B subunits. It depends on [2Fe-2S] cluster as a cofactor. FAD serves as cofactor.

It functions in the pathway pyrimidine metabolism; UMP biosynthesis via de novo pathway; orotate from (S)-dihydroorotate (NAD(+) route): step 1/1. Functionally, responsible for channeling the electrons from the oxidation of dihydroorotate from the FMN redox center in the PyrD type B subunit to the ultimate electron acceptor NAD(+). The sequence is that of Dihydroorotate dehydrogenase B (NAD(+)), electron transfer subunit from Bacillus caldolyticus.